The chain runs to 295 residues: Bifunctional protein FolD (295 aa).

Residues 166–168 (GRS), S191, and I232 each bind NADP(+).

Belongs to the tetrahydrofolate dehydrogenase/cyclohydrolase family. In terms of assembly, homodimer.

It carries out the reaction (6R)-5,10-methylene-5,6,7,8-tetrahydrofolate + NADP(+) = (6R)-5,10-methenyltetrahydrofolate + NADPH. The catalysed reaction is (6R)-5,10-methenyltetrahydrofolate + H2O = (6R)-10-formyltetrahydrofolate + H(+). It functions in the pathway one-carbon metabolism; tetrahydrofolate interconversion. In terms of biological role, catalyzes the oxidation of 5,10-methylenetetrahydrofolate to 5,10-methenyltetrahydrofolate and then the hydrolysis of 5,10-methenyltetrahydrofolate to 10-formyltetrahydrofolate. The polypeptide is Bifunctional protein FolD (Rhodopseudomonas palustris (strain BisA53)).